A 55-amino-acid polypeptide reads, in one-letter code: uncharacterized protein (55 aa).

This is an uncharacterized protein from Avena byzantina (Oat).